We begin with the raw amino-acid sequence, 269 residues long: Regulatory protein RecX (269 aa).

This sequence belongs to the RecX family.

The protein resides in the cytoplasm. In terms of biological role, modulates RecA activity. This chain is Regulatory protein RecX, found in Lactococcus lactis subsp. cremoris (strain SK11).